A 467-amino-acid polypeptide reads, in one-letter code: uncharacterized protein (467 aa).

N6-(pyridoxal phosphate)lysine is present on lysine 290.

It belongs to the class-III pyridoxal-phosphate-dependent aminotransferase family. Pyridoxal 5'-phosphate serves as cofactor.

This is an uncharacterized protein from Sinorhizobium fredii (strain NBRC 101917 / NGR234).